Consider the following 739-residue polypeptide: NAD(P)H-quinone oxidoreductase subunit 5, chloroplastic (739 aa).

Transmembrane regions (helical) follow at residues 9-29 (WVIP…LILI), 39-59 (IWAF…VQLS), 89-109 (IDPL…LVLI), 125-145 (FVYI…SNLI), 147-167 (IYFF…FWFT), 185-205 (GDFG…SLEF), 219-239 (NGIN…GAVA), 258-278 (TPIS…FLLA), 280-300 (LLPL…VGTI), 327-347 (LGYM…FHLI), 354-374 (ALLF…VGYS), 396-416 (TTFL…CFWS), 425-445 (WLYS…TAFY), 542-562 (LFPL…GISF), 610-630 (TLAI…YSFF), and 719-739 (ISSY…FFLS).

Belongs to the complex I subunit 5 family. NDH is composed of at least 16 different subunits, 5 of which are encoded in the nucleus.

The protein resides in the plastid. Its subcellular location is the chloroplast thylakoid membrane. It catalyses the reaction a plastoquinone + NADH + (n+1) H(+)(in) = a plastoquinol + NAD(+) + n H(+)(out). It carries out the reaction a plastoquinone + NADPH + (n+1) H(+)(in) = a plastoquinol + NADP(+) + n H(+)(out). Functionally, NDH shuttles electrons from NAD(P)H:plastoquinone, via FMN and iron-sulfur (Fe-S) centers, to quinones in the photosynthetic chain and possibly in a chloroplast respiratory chain. The immediate electron acceptor for the enzyme in this species is believed to be plastoquinone. Couples the redox reaction to proton translocation, and thus conserves the redox energy in a proton gradient. This chain is NAD(P)H-quinone oxidoreductase subunit 5, chloroplastic (ndhF), found in Hordeum vulgare (Barley).